Here is an 84-residue protein sequence, read N- to C-terminus: MEKKKYSKRYCRYTEAKLEYIDYKDVEMLKHSLSERYKIMPRRLTGNTKRWQERVEVAIKRARHMALIPYIVDRKKVVENPFKI.

Belongs to the bacterial ribosomal protein bS18 family. In terms of assembly, part of the 30S ribosomal subunit. Forms a tight heterodimer with protein bS6.

Its function is as follows. Binds as a heterodimer with protein bS6 to the central domain of the 16S rRNA, where it helps stabilize the platform of the 30S subunit. The protein is Small ribosomal subunit protein bS18 of Helicobacter hepaticus (strain ATCC 51449 / 3B1).